The primary structure comprises 666 residues: Galactocerebrosidase (666 aa).

The signal sequence occupies residues 1–22 (MIYKLYFAIALCFSLCFDLCIA). Thr-91 provides a ligand contact to substrate. An N-linked (GlcNAc...) asparagine glycan is attached at Asn-125. The substrate site is built by Trp-133 and Asn-179. The active-site Proton donor/acceptor is the Glu-180. Residue Glu-256 is the Nucleophile of the active site. Residues Cys-269 and Cys-376 are joined by a disulfide bond. An N-linked (GlcNAc...) asparagine glycan is attached at Asn-361. Arg-378 contacts substrate. N-linked (GlcNAc...) asparagine glycosylation is found at Asn-385, Asn-390, Asn-500, and Asn-540.

Belongs to the glycosyl hydrolase 59 family.

It localises to the lysosome. It carries out the reaction a beta-D-galactosyl-(1&lt;-&gt;1')-N-acylsphing-4-enine + H2O = an N-acylsphing-4-enine + D-galactose. It catalyses the reaction beta-D-galactosyl-(1&lt;-&gt;1)-sphing-4-enine + H2O = sphing-4-enine + D-galactose. The enzyme catalyses a D-galactosylceramide + H2O = an N-acyl-sphingoid base + D-galactose. Functionally, hydrolyzes the galactose ester bonds of glycolipids such as galactosylceramide and galactosylsphingosine. The protein is Galactocerebrosidase of Salmo salar (Atlantic salmon).